A 363-amino-acid polypeptide reads, in one-letter code: Fructose-bisphosphate aldolase 2 (363 aa).

Ser61 contacts D-glyceraldehyde 3-phosphate. Asp109 (proton donor) is an active-site residue. Positions 110, 144, 174, and 226 each coordinate Zn(2+). Dihydroxyacetone phosphate is bound at residue Gly227. His264 contributes to the Zn(2+) binding site. 265–267 (GGS) is a binding site for dihydroxyacetone phosphate.

It belongs to the class II fructose-bisphosphate aldolase family. As to quaternary structure, homodimer. The cofactor is Zn(2+).

The catalysed reaction is beta-D-fructose 1,6-bisphosphate = D-glyceraldehyde 3-phosphate + dihydroxyacetone phosphate. It participates in carbohydrate degradation; glycolysis; D-glyceraldehyde 3-phosphate and glycerone phosphate from D-glucose: step 4/4. Functionally, catalyzes the aldol condensation of dihydroxyacetone phosphate (DHAP or glycerone-phosphate) with glyceraldehyde 3-phosphate (G3P) to form fructose 1,6-bisphosphate (FBP) in gluconeogenesis and the reverse reaction in glycolysis. In Paracoccidioides lutzii (strain ATCC MYA-826 / Pb01) (Paracoccidioides brasiliensis), this protein is Fructose-bisphosphate aldolase 2 (FBA2).